Consider the following 229-residue polypeptide: Peptidase E (229 aa).

Active-site charge relay system residues include Ser120, Asp135, and His157.

It belongs to the peptidase S51 family.

It is found in the cytoplasm. The enzyme catalyses Dipeptidase E catalyzes the hydrolysis of dipeptides Asp-|-Xaa. It does not act on peptides with N-terminal Glu, Asn or Gln, nor does it cleave isoaspartyl peptides.. In terms of biological role, hydrolyzes dipeptides containing N-terminal aspartate residues. May play a role in allowing the cell to use peptide aspartate to spare carbon otherwise required for the synthesis of the aspartate family of amino acids. In Shigella sonnei (strain Ss046), this protein is Peptidase E.